A 500-amino-acid chain; its full sequence is ADP,ATP carrier protein 5 (500 aa).

11 helical membrane passes run 26 to 46 (LGKF…QNIL), 62 to 82 (IAGF…VIIY), 94 to 114 (IFYY…FVIY), 149 to 169 (YIVY…LLFW), 184 to 204 (FYTL…FLMM), 224 to 244 (ITLV…CCLL), 287 to 307 (LWLL…VEAV), 328 to 348 (LYIL…NNVM), 357 to 377 (AVIS…LIVF), 381 to 401 (ILSL…VSIG), and 469 to 489 (SISP…IYAV).

Belongs to the ADP/ATP translocase tlc family.

It is found in the cell membrane. In terms of biological role, provides the rickettsial cell with host ATP in exchange for rickettsial ADP. This is an obligate exchange system. This energy acquiring activity is an important component of rickettsial parasitism. The protein is ADP,ATP carrier protein 5 (tlcE) of Rickettsia prowazekii (strain Madrid E).